Reading from the N-terminus, the 491-residue chain is 3-octaprenyl-4-hydroxybenzoate carboxy-lyase (491 aa).

Mn(2+) is bound at residue N172. Residues 175-177 (IYR), 189-191 (RWL), and 194-195 (RG) each bind prenylated FMN. E238 lines the Mn(2+) pocket. D287 functions as the Proton donor in the catalytic mechanism.

This sequence belongs to the UbiD family. Homohexamer. The cofactor is prenylated FMN. Mn(2+) serves as cofactor.

Its subcellular location is the cell membrane. It catalyses the reaction a 4-hydroxy-3-(all-trans-polyprenyl)benzoate + H(+) = a 2-(all-trans-polyprenyl)phenol + CO2. The protein operates within cofactor biosynthesis; ubiquinone biosynthesis. In terms of biological role, catalyzes the decarboxylation of 3-octaprenyl-4-hydroxy benzoate to 2-octaprenylphenol, an intermediate step in ubiquinone biosynthesis. The chain is 3-octaprenyl-4-hydroxybenzoate carboxy-lyase from Histophilus somni (strain 129Pt) (Haemophilus somnus).